A 333-amino-acid chain; its full sequence is HTH-type transcriptional regulator pepR1 (333 aa).

In terms of domain architecture, HTH lacI-type spans 6-60 (VTIYDVAREAKVSMATVSRVVNGNNNVRKETRDRVMEVIKRLHYQPNAVAQGLAS). Positions 8–27 (IYDVAREAKVSMATVSRVVN) form a DNA-binding region, H-T-H motif.

Its function is as follows. Transcriptional regulator of the pepQ gene for prolidase. The chain is HTH-type transcriptional regulator pepR1 (pepR1) from Lactobacillus delbrueckii subsp. lactis.